Consider the following 195-residue polypeptide: Calcineurin B homologous protein 1 (195 aa).

Gly2 carries N-myristoyl glycine lipidation. Positions 2-6 match the Necessary for association with microtubule and interaction with GAPDH motif; the sequence is GSRAS. 4 EF-hand domains span residues 26–61, 66–101, 110–145, and 151–186; these read SQITRLYSRFTSLDKGENGTLSREDFQRIPELAINP, IINAFFPEGEDQVNFRGFMRTLAHFRPIEDNEKSKD, SRSNKLHFAFRLYDLDKDDKISRDELLQVLRMMVGV, and QLGSIADRTIQEADQDGDSAISFTEFVKVLEKVDVE. Ca(2+)-binding residues include Asp123, Asp125, Asp127, Lys129, and Glu134. The Nuclear export signal 1 motif lies at 138 to 147; that stretch reads VLRMMVGVNI. Asp164, Asp166, Asp168, and Glu175 together coordinate Ca(2+). Positions 176–185 match the Nuclear export signal 2 motif; it reads FVKVLEKVDV.

This sequence belongs to the calcineurin regulatory subunit family. CHP subfamily. Monomer. Interacts with STK17B; the interaction occurs in a calcium-independent manner and induces the translocation of CHP1 from the Golgi to the nucleus. Interacts with GAPDH; the interaction is direct, occurs in a N-myristoylation-dependent manner and facilitates the ability of CHP1 to bind microtubules. Interacts with KIF1B (via the C-terminal end of the kinesin-motor domain); the interaction occurs in a calcium-dependent manner. Associates (via C-terminal domain) with microtubules; the association occurs with polymerized microtubules during the cell cycle in a myristoylation- and calcium-independent manner and is enhanced by GAPDH. Interacts with PPP3CA. Interacts with SLC9A1/NHE1 (via the cytoplasmic C-terminal domain); the interaction occurs at the plasma membrane in a calcium-dependent manner and at a domain that is critical for growth factor stimulation of the exchanger. Interacts with SLC9A3; increases SLC9A3 trafficking and activity at the plasma membrane. In terms of processing, phosphorylated; decreased phosphorylation is associated with an increase in SLC9A1/NHE1 Na(+)/H(+) exchange activity. Phosphorylation occurs in serum-dependent manner. The phosphorylation state may regulate the binding to SLC9A1/NHE1. Post-translationally, both N-myristoylation and calcium-mediated conformational changes are essential for its function in exocytic traffic. N-myristoylation is required for its association with microtubules and interaction with GAPDH, but not for the constitutive association to membranes.

It localises to the nucleus. Its subcellular location is the cytoplasm. The protein resides in the cytoskeleton. It is found in the endomembrane system. The protein localises to the endoplasmic reticulum-Golgi intermediate compartment. It localises to the endoplasmic reticulum. Its subcellular location is the cell membrane. The protein resides in the membrane. Calcium-binding protein involved in different processes such as regulation of vesicular trafficking, plasma membrane Na(+)/H(+) exchanger and gene transcription. Involved in the constitutive exocytic membrane traffic. Mediates the association between microtubules and membrane-bound organelles of the endoplasmic reticulum and Golgi apparatus and is also required for the targeting and fusion of transcytotic vesicles (TCV) with the plasma membrane. Functions as an integral cofactor in cell pH regulation by controlling plasma membrane-type Na(+)/H(+) exchange activity. Affects the pH sensitivity of SLC9A1/NHE1 by increasing its sensitivity at acidic pH. Required for the stabilization and localization of SLC9A1/NHE1 at the plasma membrane. Inhibits serum- and GTPase-stimulated Na(+)/H(+) exchange. Plays a role as an inhibitor of ribosomal RNA transcription by repressing the nucleolar UBF1 transcriptional activity. May sequester UBF1 in the nucleoplasm and limit its translocation to the nucleolus. Associates to the ribosomal gene promoter. Acts as a negative regulator of the calcineurin/NFAT signaling pathway. Inhibits NFAT nuclear translocation and transcriptional activity by suppressing the calcium-dependent calcineurin phosphatase activity. Also negatively regulates the kinase activity of the apoptosis-induced kinase STK17B. Inhibits both STK17B auto- and substrate-phosphorylations in a calcium-dependent manner. The sequence is that of Calcineurin B homologous protein 1 (CHP1) from Bos taurus (Bovine).